Here is a 285-residue protein sequence, read N- to C-terminus: Phosphatidylserine decarboxylase proenzyme (285 aa).

Residues Asp-89, His-146, and Ser-252 each act as charge relay system; for autoendoproteolytic cleavage activity in the active site. Ser-252 (schiff-base intermediate with substrate; via pyruvic acid; for decarboxylase activity) is an active-site residue. Ser-252 bears the Pyruvic acid (Ser); by autocatalysis mark.

Belongs to the phosphatidylserine decarboxylase family. PSD-B subfamily. Prokaryotic type I sub-subfamily. In terms of assembly, heterodimer of a large membrane-associated beta subunit and a small pyruvoyl-containing alpha subunit. Pyruvate serves as cofactor. In terms of processing, is synthesized initially as an inactive proenzyme. Formation of the active enzyme involves a self-maturation process in which the active site pyruvoyl group is generated from an internal serine residue via an autocatalytic post-translational modification. Two non-identical subunits are generated from the proenzyme in this reaction, and the pyruvate is formed at the N-terminus of the alpha chain, which is derived from the carboxyl end of the proenzyme. The autoendoproteolytic cleavage occurs by a canonical serine protease mechanism, in which the side chain hydroxyl group of the serine supplies its oxygen atom to form the C-terminus of the beta chain, while the remainder of the serine residue undergoes an oxidative deamination to produce ammonia and the pyruvoyl prosthetic group on the alpha chain. During this reaction, the Ser that is part of the protease active site of the proenzyme becomes the pyruvoyl prosthetic group, which constitutes an essential element of the active site of the mature decarboxylase.

It is found in the cell membrane. It catalyses the reaction a 1,2-diacyl-sn-glycero-3-phospho-L-serine + H(+) = a 1,2-diacyl-sn-glycero-3-phosphoethanolamine + CO2. It functions in the pathway phospholipid metabolism; phosphatidylethanolamine biosynthesis; phosphatidylethanolamine from CDP-diacylglycerol: step 2/2. Functionally, catalyzes the formation of phosphatidylethanolamine (PtdEtn) from phosphatidylserine (PtdSer). This is Phosphatidylserine decarboxylase proenzyme from Vibrio parahaemolyticus serotype O3:K6 (strain RIMD 2210633).